The following is an 807-amino-acid chain: AP-5 complex subunit zeta-1 (807 aa).

In terms of assembly, probably part of the adaptor protein complex 5 (AP-5) a tetramer composed of AP5B1, AP5M1, AP5S1 and AP5Z1. Interacts with ZFYVE26 and SPG11.

The protein resides in the cytoplasm. Its subcellular location is the nucleus. As part of AP-5, a probable fifth adaptor protein complex it may be involved in endosomal transport. The polypeptide is AP-5 complex subunit zeta-1 (Ap5z1) (Mus musculus (Mouse)).